The following is a 295-amino-acid chain: Urease accessory protein UreD (295 aa).

The protein belongs to the UreD family. In terms of assembly, ureD, UreF and UreG form a complex that acts as a GTP-hydrolysis-dependent molecular chaperone, activating the urease apoprotein by helping to assemble the nickel containing metallocenter of UreC. The UreE protein probably delivers the nickel.

It is found in the cytoplasm. Its function is as follows. Required for maturation of urease via the functional incorporation of the urease nickel metallocenter. In Ralstonia nicotianae (strain ATCC BAA-1114 / GMI1000) (Ralstonia solanacearum), this protein is Urease accessory protein UreD.